The following is an 832-amino-acid chain: Histone acetyltransferase KAT2B (832 aa).

A compositionally biased stretch (gly residues) spans 1 to 22; sequence MSEAGGAGPGGCGAGAGAGAGP. Disordered regions lie at residues 1 to 54 and 395 to 436; these read MSEA…ACGP and SYNS…DSHV. A compositionally biased stretch (pro residues) spans 24–39; the sequence is ALPPQPAALPPAPPQG. Over residues 40-54 the composition is skewed to low complexity; that stretch reads SPCAAAAGGSGACGP. Residues 395–413 show a composition bias toward polar residues; the sequence is SYNSTSSSLEQPNAGSSSP. Positions 425–436 are enriched in basic and acidic residues; that stretch reads PGEKRKMTDSHV. The N-acetyltransferase domain maps to 503 to 651; sequence LNQKPNKKIL…GATLMGCELN (149 aa). Glutamate 570 functions as the Proton donor/acceptor in the catalytic mechanism. Acetyl-CoA contacts are provided by residues 574-576, 581-587, and 612-615; these read CAV, QVKGYGT, and YAIG. A disordered region spans residues 706-725; that stretch reads IRETGWKPSGKEKSKEPRDP. Positions 714 to 725 are enriched in basic and acidic residues; it reads SGKEKSKEPRDP. The Bromo domain maps to 723 to 827; sequence RDPDQLYSTL…KFFFSKIKEA (105 aa).

This sequence belongs to the acetyltransferase family. GCN5 subfamily. Interacts with SIRT1. Interacts (unsumoylated form) with NR2C1; the interaction promotes transactivation activity. Interacts with EP300, CREBBP and DDX17. Interacts with NCOA1 and NCOA3. Component of a large chromatin remodeling complex, at least composed of MYSM1, KAT2B/PCAF, RBM10 and KIF11/TRIP5. Interacts with NR2C2 (hypophosphorylated and unsumoylated form); the interaction promotes the transactivation activity of NR2C2. Interacts with KLF1; the interaction does not acetylate KLF1 and there is no enhancement of its transactivational activity. Interacts with NFE4. Interacts with MECOM. Interacts with E2F1; the interaction acetylates E2F1 augmenting its DNA-binding and transcriptional activity. Interacts with NPAS2, BMAL1 and CLOCK. Interacts with BCAS3. Interacts with CEBPB. Interacts with NR4A3. Interacts with NFATC2. Interacts with TBX5. Interacts with PLK4. Interacts with RB1; this interaction leads to RB1 acetylation. Interacts with VRK1. In terms of assembly, (Microbial infection) Interacts with and acetylates HIV-1 Tat. As to quaternary structure, (Microbial infection) Interacts with HTLV-1 Tax. As to expression, ubiquitously expressed but most abundant in heart and skeletal muscle. Also expressed in the skin, in keratinocytes (at protein level).

The protein localises to the nucleus. It is found in the cytoplasm. Its subcellular location is the cytoskeleton. The protein resides in the microtubule organizing center. It localises to the centrosome. It catalyses the reaction L-lysyl-[histone] + acetyl-CoA = N(6)-acetyl-L-lysyl-[histone] + CoA + H(+). The enzyme catalyses L-lysyl-[protein] + acetyl-CoA = N(6)-acetyl-L-lysyl-[protein] + CoA + H(+). The catalysed reaction is spermidine + acetyl-CoA = N(8)-acetylspermidine + CoA + H(+). Activated in vitro by very low concentrations of spermidine, but inhibited at spermidine concentrations higher than 4 uM. The activating effect of low spermidine concentrations may be mediated by N(8)-acetylspermidine produced by KAT2B/P/CAF itself acting as a positive feedback loop. Functionally, functions as a histone acetyltransferase (HAT) to promote transcriptional activation. Has significant histone acetyltransferase activity with core histones (H3 and H4), and also with nucleosome core particles. Has a a strong preference for acetylation of H3 at 'Lys-9' (H3K9ac). Also acetylates non-histone proteins, such as ACLY, MAPRE1/EB1, PLK4, RRP9/U3-55K and TBX5. Inhibits cell-cycle progression and counteracts the mitogenic activity of the adenoviral oncoprotein E1A. Acts as a circadian transcriptional coactivator which enhances the activity of the circadian transcriptional activators: NPAS2-BMAL1 and CLOCK-BMAL1 heterodimers. Involved in heart and limb development by mediating acetylation of TBX5, acetylation regulating nucleocytoplasmic shuttling of TBX5. Acts as a negative regulator of centrosome amplification by mediating acetylation of PLK4. Acetylates RRP9/U3-55K, a core subunit of the U3 snoRNP complex, impairing pre-rRNA processing. Acetylates MAPRE1/EB1, promoting dynamic kinetochore-microtubule interactions in early mitosis. Also acetylates spermidine. In terms of biological role, (Microbial infection) In case of HIV-1 infection, it is recruited by the viral protein Tat. Regulates Tat's transactivating activity and may help inducing chromatin remodeling of proviral genes. The chain is Histone acetyltransferase KAT2B from Homo sapiens (Human).